The following is a 20-amino-acid chain: Large ribosomal subunit protein bL31 (20 aa).

Zn(2+) is bound by residues Xaa16 and Xaa18.

The protein belongs to the bacterial ribosomal protein bL31 family. Type A subfamily. In terms of assembly, part of the 50S ribosomal subunit. Zn(2+) is required as a cofactor.

Its function is as follows. Binds the 23S rRNA. The chain is Large ribosomal subunit protein bL31 (rpmE) from Ectopseudomonas mendocina (Pseudomonas mendocina).